Consider the following 216-residue polypeptide: Homologous-pairing protein 2 (216 aa).

Belongs to the HOP2 family. In terms of assembly, interacts with mcp7.

It localises to the nucleus. Required for proper homologous pairing and efficient cross-over and intragenic recombination during meiosis. Acts indirectly in a process facilitating homologous recombination. Acts during mid- to late-horse-tail period. The chain is Homologous-pairing protein 2 (meu13) from Schizosaccharomyces pombe (strain 972 / ATCC 24843) (Fission yeast).